A 138-amino-acid polypeptide reads, in one-letter code: Phospholipase A2 homolog crotoxin acid subunit CA (138 aa).

The signal sequence occupies residues 1 to 37; sequence MRALWIVAVLLVGVEGSLVEFETLMMKIAGRSGISYY. Intrachain disulfides connect Cys42/Cys131, Cys44/Cys60, Cys59/Cys111, Cys65/Cys138, Cys66/Cys104, Cys73/Cys97, Cys91/Cys102, and Cys131/Cys138. A propeptide spanning residues 79–82 is cleaved from the precursor; it reads VYTY. Gln84 carries the post-translational modification Pyrrolidone carboxylic acid. The propeptide occupies 119–124; the sequence is YDYKYL. Gln125 carries the post-translational modification Pyrrolidone carboxylic acid.

The protein belongs to the phospholipase A2 family. Group II subfamily. D49 sub-subfamily. As to quaternary structure, heterodimer of one of the acidic (CA1, CA2, CA3 or CA4) and one of the basic (CBa1, CBa2, CBb, CBc or CBd) subunits; non-covalently linked. The acidic subunit is non-toxic, without enzymatic activity and comprises 3 peptides that are cross-linked by 5 disulfide bridges. The basic subunit is toxic, has phospholipase A2 activity and is composed of a single chain. Multiple variants of each subunit give different crotoxin complexes that can be subdivided into 2 classes: (1) those of high toxicity, low PLA2 activity (CBb, CBc and CBd linked with high affinity to any CA) and high stability (K(d)=4.5 nM) and (2) those of moderate toxicity, high PLA2 activity (CBa2 linked with low affinity to any CA) and low stability (K(d)=25 nM). In terms of tissue distribution, expressed by the venom gland.

It is found in the secreted. In terms of biological role, CAalpha-CAbeta-CAgamma: The acidic subunit of crotoxin (CA) is a heterotrimer of three disulfide-linked chains generated by post-translational maturation of a PLA2-like precursor. CA has no PLA2 activity and is not neurotoxic by itself, but plays several important functions in the crotoxin complex by increasing the lethal potency of the uncomplexed CB subunit. It acts by physically occluding the hydrophobic interfacial binding surface (IBS) of CB. This effect decreases the adsorption of CB to phospholipid membranes, targeting the crotoxin complex to reach the specific presynaptic receptor (R48) at the neuromuscular junction. It also prevents the formation of the reactive CB dimer. Moreover, the CA subunit inhibits the catalytic activity by partially masking the catalytic site of CB and inhibits its anticoagulant activity. Heterodimer CA-CB: Crotoxin is a potent presynaptic neurotoxin that possesses phospholipase A2 (PLA2) activity and exerts a lethal action by blocking neuromuscular transmission. It consists of a non-covalent association of a basic and weakly toxic PLA2 subunit (CBa2, CBb, CBc, or CBd), with a small acidic, non-enzymatic and non-toxic subunit (CA1, CA2, CA3 or CA4). The complex acts by binding to a specific 48-kDa protein (R48/CAPT) receptor located on presynaptic membranes, forming a transient ternary complex CA-CB-R48, followed by dissociation of the CA-CB complex and release of the CA subunit. At equilibrium, only the CB subunits remain associated with the specific crotoxin receptor. In addition to neurotoxicity, crotoxin has been found to exert myotoxicity, nephrotoxicity, and cardiovascular toxicity. Moreover, anti-inflammatory, immunomodulatory, anti-tumor and analgesic effects of crotoxin have also been reported. Its function is as follows. Found in the venom as a monomer and stabilized by one disulfide bond (Cys-131 and Cys-138). This peptide induces potent antinociceptive effects in acute and chronic pain models. This effect is mediated by the release of peripheral dynorphin A, an endogenous agonist of kappa-opioid receptors, and this release is dependent on cannabinoid receptor CB2 activation. The protein is Phospholipase A2 homolog crotoxin acid subunit CA of Crotalus durissus terrificus (South American rattlesnake).